An 881-amino-acid polypeptide reads, in one-letter code: Alanine--tRNA ligase (881 aa).

This sequence belongs to the class-II aminoacyl-tRNA synthetase family.

The protein localises to the cytoplasm. It catalyses the reaction tRNA(Ala) + L-alanine + ATP = L-alanyl-tRNA(Ala) + AMP + diphosphate. In terms of biological role, catalyzes the attachment of alanine to tRNA(Ala) in a two-step reaction: alanine is first activated by ATP to form Ala-AMP and then transferred to the acceptor end of tRNA(Ala). Also edits incorrectly charged Ser-tRNA(Ala) and Gly-tRNA(Ala) via its editing domain. The polypeptide is Alanine--tRNA ligase (alaS) (Lacticaseibacillus paracasei (strain ATCC 334 / BCRC 17002 / CCUG 31169 / CIP 107868 / KCTC 3260 / NRRL B-441) (Lactobacillus paracasei)).